Consider the following 602-residue polypeptide: MPAENKKVRFENTTSDKGKIPSKVIKSYYGTMDIKKINEGLLDSKILSAFNTVIALLGSIVIIVMNIMIIQNYTRSTDNQAVIKDALQGIQQQIKGLADKIGTEIGPKVSLIDTSSTITIPANIGLLGSKISQSTASINENVNEKCKFTLPPLKIHECNISCPNPLPFREYRPQTEGVSNLVGLPNNICLQKTSNQILKPKLISYTLPVVGQSGTCITDPLLAMDEGYFAYSHLERIGSCSRGVSKQRIIGVGEVLDRGDEVPSLFMTNVWTPPNPNTVYHCSAVYNNEFYYVLCAVSTVGDPILNSTYWSGSLMMTRLAVKPKSNGGGYNQHQLALRSIEKGRYDKVMPYGPSGIKQGDTLYFPAVGFLVRTEFKYNDSNCPITKCQYSKPENCRLSMGIRPNSHYILRSGLLKYNLSDGENPKVVFIEISDQRLSIGSPSKIYDSLGQPVFYQASFSWDTMIKFGDVLTVNPLVVNWRNNTVISRPGQSQCPRFNTCPEICWEGVYNDAFLIDRINWISAGVFLDSNQTAENPVFTVFKDNEILYRAQLASEDTNAQKTITNCFLLKNKIWCISLVEIYDTGDNVIRPKLFAVKIPEQCT.

Residues 1–49 (MPAENKKVRFENTTSDKGKIPSKVIKSYYGTMDIKKINEGLLDSKILSA) lie on the Intravirion side of the membrane. A helical transmembrane segment spans residues 50–70 (FNTVIALLGSIVIIVMNIMII). Residues 71-602 (QNYTRSTDNQ…FAVKIPEQCT (532 aa)) lie on the Virion surface side of the membrane. Residues Asn-72 and Asn-159 are each glycosylated (N-linked (GlcNAc...) asparagine; by host). Residues 96-163 (GLADKIGTEI…KIHECNISCP (68 aa)) are stalk. Positions 177–602 (GVSNLVGLPN…FAVKIPEQCT (426 aa)) are head. 7 cysteine pairs are disulfide-bonded: Cys-189–Cys-601, Cys-216–Cys-240, Cys-282–Cys-295, Cys-382–Cys-395, Cys-387–Cys-499, Cys-493–Cys-503, and Cys-565–Cys-574. N-linked (GlcNAc...) asparagine; by host glycans are attached at residues Asn-306 and Asn-378. N-linked (GlcNAc...) asparagine; by host glycosylation is found at Asn-417 and Asn-481. Asn-529 is a glycosylation site (N-linked (GlcNAc...) asparagine; by host).

Belongs to the paramyxoviruses hemagglutinin-neuraminidase family. As to quaternary structure, homotetramer; disulfide-linked. Interacts with host EFNB2; this interaction allows the virus entry into the host cell. Interacts with host EFNB3; this interaction allows the virus entry into the host cell. Interacts with the fusion glycoprotein; this interaction involves both head and stalk regions of glygoprotein G. N-glycosylated.

The protein localises to the virion membrane. It is found in the host cell membrane. Its function is as follows. Interacts with host ephrinB2/EFNB2 or ephrin B3/EFNB3 to provide virion attachment to target cell. This attachment induces virion internalization predominantly through clathrin-mediated endocytosis. This Cynopterus brachyotis (Lesser short-nosed fruit bat) protein is Glycoprotein G (G).